We begin with the raw amino-acid sequence, 356 residues long: Naringenin,2-oxoglutarate 3-dioxygenase (356 aa).

Residues cysteine 188–proline 292 form the Fe2OG dioxygenase domain. Fe cation is bound by residues histidine 215, aspartate 217, and histidine 273. Position 283 (arginine 283) interacts with 2-oxoglutarate.

Belongs to the iron/ascorbate-dependent oxidoreductase family. Requires Fe(2+) as cofactor. L-ascorbate serves as cofactor.

The enzyme catalyses a (2S)-flavan-4-one + 2-oxoglutarate + O2 = a (2R,3R)-dihydroflavonol + succinate + CO2. Its pathway is secondary metabolite biosynthesis; flavonoid biosynthesis. Functionally, catalyzes the 3-beta-hydroxylation of 2S-flavanones to 2R,3R-dihydroflavonols which are intermediates in the biosynthesis of flavonols, anthocyanidins, catechins and proanthocyanidins in plants. The chain is Naringenin,2-oxoglutarate 3-dioxygenase (FHT) from Callistephus chinensis (China aster).